The chain runs to 156 residues: Small ribosomal subunit protein uS7 (156 aa).

This sequence belongs to the universal ribosomal protein uS7 family. Part of the 30S ribosomal subunit. Contacts proteins S9 and S11.

In terms of biological role, one of the primary rRNA binding proteins, it binds directly to 16S rRNA where it nucleates assembly of the head domain of the 30S subunit. Is located at the subunit interface close to the decoding center, probably blocks exit of the E-site tRNA. The protein is Small ribosomal subunit protein uS7 of Geotalea daltonii (strain DSM 22248 / JCM 15807 / FRC-32) (Geobacter daltonii).